The primary structure comprises 126 residues: Protein ApaG (126 aa).

In terms of domain architecture, ApaG spans 2–126; it reads ADKLYQMEVQ…MTLVAPRVLH (125 aa).

This chain is Protein ApaG, found in Chromobacterium violaceum (strain ATCC 12472 / DSM 30191 / JCM 1249 / CCUG 213 / NBRC 12614 / NCIMB 9131 / NCTC 9757 / MK).